The chain runs to 138 residues: Large ribosomal subunit protein uL16 (138 aa).

Residues 1-15 (MLSPKKVKYRKKQRG) are compositionally biased toward basic residues. Residues 1–20 (MLSPKKVKYRKKQRGRLSGE) form a disordered region.

It belongs to the universal ribosomal protein uL16 family. Part of the 50S ribosomal subunit.

Binds 23S rRNA and is also seen to make contacts with the A and possibly P site tRNAs. This chain is Large ribosomal subunit protein uL16, found in Borrelia hermsii (strain HS1 / DAH).